The following is a 235-amino-acid chain: uncharacterized protein (235 aa).

The N-acetyltransferase domain occupies 82–221; the sequence is LAFKKFPPDP…DTGELIRESP (140 aa).

This sequence belongs to the acetyltransferase family.

It is found in the golgi apparatus membrane. The protein resides in the endoplasmic reticulum membrane. This is an uncharacterized protein from Schizosaccharomyces pombe (strain 972 / ATCC 24843) (Fission yeast).